The chain runs to 385 residues: GDSL esterase/lipase At5g08460 (385 aa).

A signal peptide spans 1 to 35; sequence MHDSEIFKFKDMMMMSCTVQTLVLVPWFLVVFVLA. Ser-56 acts as the Nucleophile in catalysis. N-linked (GlcNAc...) asparagine glycans are attached at residues Asn-218 and Asn-285. Active-site residues include Asp-350 and His-353. Asn-368 and Asn-378 each carry an N-linked (GlcNAc...) asparagine glycan.

It belongs to the 'GDSL' lipolytic enzyme family.

Its subcellular location is the secreted. This is GDSL esterase/lipase At5g08460 from Arabidopsis thaliana (Mouse-ear cress).